The sequence spans 305 residues: Homoserine O-acetyltransferase (305 aa).

Cys142 functions as the Acyl-thioester intermediate in the catalytic mechanism. Substrate is bound by residues Lys163 and Ser192. His235 acts as the Proton acceptor in catalysis. The active site involves Glu237. Residue Arg249 participates in substrate binding.

It belongs to the MetA family.

Its subcellular location is the cytoplasm. The catalysed reaction is L-homoserine + acetyl-CoA = O-acetyl-L-homoserine + CoA. It functions in the pathway amino-acid biosynthesis; L-methionine biosynthesis via de novo pathway; O-acetyl-L-homoserine from L-homoserine: step 1/1. Its function is as follows. Transfers an acetyl group from acetyl-CoA to L-homoserine, forming acetyl-L-homoserine. This Bacteroides thetaiotaomicron (strain ATCC 29148 / DSM 2079 / JCM 5827 / CCUG 10774 / NCTC 10582 / VPI-5482 / E50) protein is Homoserine O-acetyltransferase.